The primary structure comprises 290 residues: Glutamate racemase (290 aa).

Residues 24–25 (DS) and 56–57 (YG) contribute to the substrate site. Cys-87 serves as the catalytic Proton donor/acceptor. 88–89 (NT) contacts substrate. Residue Cys-199 is the Proton donor/acceptor of the active site. Substrate is bound at residue 200–201 (TH). The interval 271 to 290 (GADGASLPDPPSPRIELTTT) is disordered.

It belongs to the aspartate/glutamate racemases family.

It catalyses the reaction L-glutamate = D-glutamate. The protein operates within cell wall biogenesis; peptidoglycan biosynthesis. In terms of biological role, provides the (R)-glutamate required for cell wall biosynthesis. In Deinococcus radiodurans (strain ATCC 13939 / DSM 20539 / JCM 16871 / CCUG 27074 / LMG 4051 / NBRC 15346 / NCIMB 9279 / VKM B-1422 / R1), this protein is Glutamate racemase.